The sequence spans 343 residues: Acetylglutamate kinase (343 aa).

Residues 98–99 (GG), arginine 120, and asparagine 219 each bind substrate.

The protein belongs to the acetylglutamate kinase family. ArgB subfamily.

Its subcellular location is the cytoplasm. It catalyses the reaction N-acetyl-L-glutamate + ATP = N-acetyl-L-glutamyl 5-phosphate + ADP. Its pathway is amino-acid biosynthesis; L-arginine biosynthesis; N(2)-acetyl-L-ornithine from L-glutamate: step 2/4. Its function is as follows. Catalyzes the ATP-dependent phosphorylation of N-acetyl-L-glutamate. This chain is Acetylglutamate kinase, found in Frankia alni (strain DSM 45986 / CECT 9034 / ACN14a).